The sequence spans 261 residues: UPF0246 protein Rmet_0978 (261 aa).

It belongs to the UPF0246 family.

The sequence is that of UPF0246 protein Rmet_0978 from Cupriavidus metallidurans (strain ATCC 43123 / DSM 2839 / NBRC 102507 / CH34) (Ralstonia metallidurans).